Here is a 465-residue protein sequence, read N- to C-terminus: MKHIVKHIHFVGIGGAGMSGIAEVLVNLGYEVSGSDLSRNAVTDRLQALGARIAIGHDAVNIEGANAVVVSTAVRSDNPEVLAARAKRVPIVQRAVMLAELMRLKQGIAIAGTHGKTTTTSLVASVLAAGGLDPTFVIGGRLISAGANARLGTGDFIVAEADESDASFLNLYPVIEVITNIDADHMDTYGHDFARLKQAFIEFTQRLPFYGSAVVCVDDPNVRQIIPFISKPVVRYGLSPDAQVRAEDIDARDGRMHFTVIRDGRAPLAVVLNMPGLHNVQNALAAIAIATDLGVSDDAIQLALAEFNGVGRRFQRYGEVPAADGGQYTLIDDYGHHPVEMAATIAAARGAFPGRRLVLAFQPHRYTRTRDCFDDFVNVLSTVDALVLTEVYAAGEAAISTANGDALSRALRTVGKVDPVFVATVDDVPDALAKVAQNGDVVITMGAGSIGGVPAKVAQHTQQKA.

112 to 118 lines the ATP pocket; the sequence is GTHGKTT.

It belongs to the MurCDEF family.

It is found in the cytoplasm. It carries out the reaction UDP-N-acetyl-alpha-D-muramate + L-alanine + ATP = UDP-N-acetyl-alpha-D-muramoyl-L-alanine + ADP + phosphate + H(+). It functions in the pathway cell wall biogenesis; peptidoglycan biosynthesis. In terms of biological role, cell wall formation. The polypeptide is UDP-N-acetylmuramate--L-alanine ligase (Burkholderia lata (strain ATCC 17760 / DSM 23089 / LMG 22485 / NCIMB 9086 / R18194 / 383)).